The primary structure comprises 488 residues: Histone deacetylase 2 (488 aa).

The segment at 9-322 (KKKVCYYYDG…WTYETAVALD (314 aa)) is histone deacetylase. 1D-myo-inositol 1,4,5,6-tetrakisphosphate is bound by residues glycine 28 and lysine 32. Position 75 is an N6-acetyllysine; alternate (lysine 75). Residue lysine 75 forms a Glycyl lysine isopeptide (Lys-Gly) (interchain with G-Cter in SUMO2); alternate linkage. The active site involves histidine 142. Residues aspartate 175, aspartate 177, histidine 179, phenylalanine 188, threonine 191, valine 194, serine 198, and phenylalanine 199 each contribute to the Ca(2+) site. Zn(2+)-binding residues include aspartate 177 and histidine 179. Lysine 221 carries the N6-acetyllysine modification. Tyrosine 223 serves as a coordination point for Ca(2+). Cysteine 262 carries the post-translational modification S-nitrosocysteine. Aspartate 265 contributes to the Zn(2+) binding site. Residue arginine 271 participates in 1D-myo-inositol 1,4,5,6-tetrakisphosphate binding. Cysteine 274 bears the S-nitrosocysteine mark. Residues 389 to 488 (AVHEDSGDED…GTKSEQLSNP (100 aa)) are disordered. A phosphoserine mark is found at serine 394, serine 407, serine 422, and serine 424. Positions 402-417 (PDKRISIRASDKRIAC) are enriched in basic and acidic residues. Positions 418–428 (DEEFSDSEDEG) are enriched in acidic residues. The span at 429–481 (EGGRRNVADHKKGAKKARIEEDKKETEDKKTDVKEEDKSKDNSGEKTDTKGTK) shows a compositional bias: basic and acidic residues. Glycyl lysine isopeptide (Lys-Gly) (interchain with G-Cter in SUMO2) cross-links involve residues lysine 439, lysine 452, lysine 458, lysine 462, lysine 478, and lysine 481.

Belongs to the histone deacetylase family. HD type 1 subfamily. As to quaternary structure, part of the core histone deacetylase (HDAC) complex composed of HDAC1, HDAC2, RBBP4 and RBBP7, the core complex associates with SIN3, SAP18 and SAP30 to form the SIN3 HDAC complex. Component of the nucleosome remodeling and deacetylase (NuRD) repressor complex, composed of core proteins MTA1, MTA2, MTA3, RBBP4, RBBP7, HDAC1, HDAC2, MBD2, MBD3, and peripherally associated proteins CDK2AP1, CDK2AP2, GATAD2A, GATAD2B, CHD3, CHD4 and CHD5. The exact stoichiometry of the NuRD complex is unknown, and some subunits such as MBD2 and MBD3, GATAD2A and GATAD2B, and CHD3, CHD4 and CHD5 define mutually exclusive NuRD complexes. Component of a RCOR/GFI/KDM1A/HDAC complex. Component of a BHC histone deacetylase complex that contains HDAC1, HDAC2, HMG20B, KDM1A, RCOR1 and PHF21A. The BHC complex may also contain ZMYM2, ZNF217, ZMYM3, GSE1 and GTF2I. Part of a complex containing the core histones H2A, H2B, H3 and H4, DEK and unphosphorylated DAXX. Part of a complex containing ATR and CHD4. Forms a heterologous complex at least with YY1. Interacts in the late S-phase of DNA-replication with DNMT1 in the other transcriptional repressor complex composed of DNMT1, DMAP1, PCNA, CAF1. Component of a mSin3A corepressor complex that contains SIN3A, SAP130, SUDS3, ARID4B, HDAC1 and HDAC2. Part of a complex composed of TRIM28, HDAC1, HDAC2 and EHMT2. Part of a complex containing at least CDYL, MIER1, MIER2, HDAC1 and HDAC2. Component of a histone deacetylase complex containing DNTTIP1, ZNF541, HDAC1 and HDAC2. Forms a complex comprising APPL1, RUVBL2, APPL2, CTNNB1 and HDAC1. Interacts directly with GFI1. Interacts directly with GFI1B. Interacts with APEX1; the interaction is not dependent on the acetylated status of APEX1. Interacts with ATR. Interacts with BCL6 (non-acetylated form). Interacts with BEND3. Interacts with CBFA2T3. Interacts with CDK2AP1. Interacts with CHD4. Interacts with CHD5. Interacts with CHFR. Interacts with CRY1. Interacts with DNMT1. Interacts with GATAD2A. Interacts with HCFC1. Interacts with HDAC7. Interacts with HDAC10. Interacts with INSM1. Interacts with KDM4A. Interacts with MACROH2A1 (via the non-histone region). Interacts with MBD3L2. Interacts with MTA1, with a preference for sumoylated MTA1. Interacts with NACC2. Interacts with NRIP1. Interacts with PELP1. Interacts with PIMREG. Interacts with PRDM6. Interacts with PWWP2B. Interacts with SAP30. Interacts with SAP30L. Interacts with SETDB1. Interacts with SIX3. Interacts with SMARCAD1. Interacts with SNW1. Interacts with SPHK2. Interacts with SPEN/MINT. Interacts (CK2 phosphorylated form) with SP3. Interacts with SUV39H1. Interacts with TSHZ3 (via its N-terminus). Interacts with ZMYND8. Interacts with ZNF431. Interacts with ZNF263; recruited to the SIX3 promoter along with other proteins involved in chromatin modification and transcriptional corepression where it contributes to transcriptional repression. Identified in a complex with HDAC1, KCTD19, DNTTIP1 and ZNF541. Component of the SIN3B complex, which includes SIN3B, HDAC2, PHF12 and MORF4L1; interacts directly with all subunits. Zn(2+) is required as a cofactor. Requires Ca(2+) as cofactor. Post-translationally, S-nitrosylated by GAPDH. In neurons, S-nitrosylation at Cys-262 and Cys-274 does not affect enzyme activity, but induces HDAC2 release from chromatin. This in turn increases acetylation of histones surrounding neurotrophin-dependent gene promoters and promotes their transcription. In embryonic cortical neurons, S-Nitrosylation regulates dendritic growth and branching. As to expression, widely expressed; lower levels in brain and lung.

Its subcellular location is the nucleus. The protein resides in the cytoplasm. It catalyses the reaction N(6)-acetyl-L-lysyl-[histone] + H2O = L-lysyl-[histone] + acetate. It carries out the reaction N(6)-acetyl-L-lysyl-[protein] + H2O = L-lysyl-[protein] + acetate. The enzyme catalyses N(6)-(2E)-butenoyl-L-lysyl-[protein] + H2O = (2E)-2-butenoate + L-lysyl-[protein]. The catalysed reaction is N(6)-(2-hydroxyisobutanoyl)-L-lysyl-[protein] + H2O = 2-hydroxy-2-methylpropanoate + L-lysyl-[protein]. It catalyses the reaction N(6)-[(S)-lactoyl]-L-lysyl-[protein] + H2O = (S)-lactate + L-lysyl-[protein]. Inositol tetraphosphate (1D-myo-inositol 1,4,5,6-tetrakisphosphate) may act as an intermolecular glue between HDAC2 and N-Cor repressor complex components. Histone deacetylase that catalyzes the deacetylation of lysine residues on the N-terminal part of the core histones (H2A, H2B, H3 and H4). Histone deacetylation gives a tag for epigenetic repression and plays an important role in transcriptional regulation, cell cycle progression and developmental events. Histone deacetylases act via the formation of large multiprotein complexes. Forms transcriptional repressor complexes by associating with MAD, SIN3, YY1 and N-COR. Component of a RCOR/GFI/KDM1A/HDAC complex that suppresses, via histone deacetylase (HDAC) recruitment, a number of genes implicated in multilineage blood cell development. Acts as a component of the histone deacetylase NuRD complex which participates in the remodeling of chromatin. Component of the SIN3B complex that represses transcription and counteracts the histone acetyltransferase activity of EP300 through the recognition H3K27ac marks by PHF12 and the activity of the histone deacetylase HDAC2. Also deacetylates non-histone targets: deacetylates TSHZ3, thereby regulating its transcriptional repressor activity. May be involved in the transcriptional repression of circadian target genes, such as PER1, mediated by CRY1 through histone deacetylation. Involved in MTA1-mediated transcriptional corepression of TFF1 and CDKN1A. In addition to protein deacetylase activity, also acts as a protein-lysine deacylase by recognizing other acyl groups: catalyzes removal of (2E)-butenoyl (crotonyl), lactoyl (lactyl) and 2-hydroxyisobutanoyl (2-hydroxyisobutyryl) acyl groups from lysine residues, leading to protein decrotonylation, delactylation and de-2-hydroxyisobutyrylation, respectively. The polypeptide is Histone deacetylase 2 (Homo sapiens (Human)).